The sequence spans 148 residues: Cell division protein SepF (148 aa).

Belongs to the SepF family. As to quaternary structure, homodimer. Interacts with FtsZ.

Its subcellular location is the cytoplasm. Its function is as follows. Cell division protein that is part of the divisome complex and is recruited early to the Z-ring. Probably stimulates Z-ring formation, perhaps through the cross-linking of FtsZ protofilaments. Its function overlaps with FtsA. In Alkaliphilus metalliredigens (strain QYMF), this protein is Cell division protein SepF.